A 569-amino-acid polypeptide reads, in one-letter code: MALLAAATLNPTTHLSLRSRAGRNSENLWLRSAASSQKSKGRFCNLTIRAGTPSKPAEPIGPVFTKLKPWQIPKRDWFDKDFLFGASTSAYQIEGAWNEDGKGPSTWDHFCHTYPERISDRTNGDVAANSYHLYEEDVKALKDMGMKVYRFSIAWSRILPDGTGKVNQAGIDYYNKLINSLIDNDIVPYVTIWHWDTPQALEDKYGGFLNRKIVDDYKQFAEVCFKNFGDRVKNWFTFNEPHTYCCFSYGEGIHAPGRCSPGMDCAVPKGDSLREPYTAGHHILLAHAEAVELFKACYNKHGDSKIGMAFDVMGYEPFQDSFLDDQARERSIDYNLGWFLEPVVRGDYPFSMRSLIGDRLPKFTKEEQEKLASSCDIMGLNYYTSRFSKHIDISSDFTPKLNTDDAYASSETKGSDGNDIGPITGTYWIYMYPKGLTDLLLIMKEKYGNPPIFITENGIADVDSDPTMTDPLDDWKRLDYLQRHISAVKDAIDQGADVRGHFTWGLIDNFEWSLGYSSRFGLVYIDKKDGNKRKLKKSAKWFAKFNSVPKRLLKTTNNNATVTVTSVSV.

The N-terminal 50 residues, 1–50 (MALLAAATLNPTTHLSLRSRAGRNSENLWLRSAASSQKSKGRFCNLTIRA), are a transit peptide targeting the chloroplast. Residues Q92, H194, and 239–240 (NE) each bind a beta-D-glucoside. The Proton donor role is filled by E240. C259 and C265 are joined by a disulfide. A beta-D-glucoside-binding positions include Y383, E456, W504, 511–512 (EW), and F520. Residue E456 is the Nucleophile of the active site.

It belongs to the glycosyl hydrolase 1 family. As to quaternary structure, homo- and heterohexamers. In terms of tissue distribution, expressed in young seedlings early after germination.

Its subcellular location is the plastid. It is found in the chloroplast. It catalyses the reaction Hydrolysis of terminal, non-reducing beta-D-glucosyl residues with release of beta-D-glucose.. The catalysed reaction is DIMBOA beta-D-glucoside + H2O = DIMBOA + D-glucose. It carries out the reaction DIBOA beta-D-glucoside + H2O = DIBOA + D-glucose. Functionally, acts in defense of young plant parts against pests via the production of hydroxamic acids from hydroxamic acid glucosides. Enzymatic activity is highly correlated with plant growth. The preferred substrate is DIMBOA-beta-D-glucoside. In Triticum aestivum (Wheat), this protein is 4-hydroxy-7-methoxy-3-oxo-3,4-dihydro-2H-1,4-benzoxazin-2-yl glucoside beta-D-glucosidase 1a, chloroplastic (GLU1A).